The chain runs to 649 residues: Transcription factor E2-alpha (649 aa).

5 disordered regions span residues 34-107 (GKGR…SERS), 127-206 (LPGE…SAKT), 222-267 (LHPS…GLQQ), 291-325 (SAAP…SSSG), and 339-382 (DHSS…DGGL). Polar residues-rich tracts occupy residues 56 to 76 (SSGS…SRTY) and 85 to 94 (SHNSLPSSTF). Low complexity predominate over residues 127–143 (LPGELGLSSPGPLSPSG). Ser135 and Ser140 each carry phosphoserine. The segment covering 145 to 156 (KSGSQYYPSYPS) has biased composition (polar residues). A Nuclear localization signal motif is present at residues 171–177 (SKKVRKV). Composition is skewed to low complexity over residues 182-193 (PSSVYPSSSGDS) and 242-259 (GDGS…SVGS). A compositionally biased stretch (low complexity) spans 339–352 (DHSSNNFSPSPSTP). Phosphothreonine is present on Thr351. Ser355 carries the phosphoserine modification. Arg367 carries the omega-N-methylarginine modification. Position 375 is a phosphoserine (Ser375). The tract at residues 385-420 (LSKMEDRLDEAIHVLRSHAVGTASDLHGLLPGHGAL) is leucine-zipper. Positions 431-547 (GGRHAGLVGG…KAEREKERRV (117 aa)) are disordered. A compositionally biased stretch (polar residues) spans 448-469 (TSGTSLLHTHASLPSQASSLPD). Lys494 participates in a covalent cross-link: Glycyl lysine isopeptide (Lys-Gly) (interchain with G-Cter in SUMO2). Ser524 bears the Phosphoserine mark. Glu529 is subject to Phosphothreonine. Residues 537–547 (QKAEREKERRV) show a composition bias toward basic and acidic residues. The bHLH domain occupies 544–597 (ERRVANNARERLRVRDINEAFKELGRMCQLHLSSEKPQTKLLILHQAVAVILSL). Lys620 is covalently cross-linked (Glycyl lysine isopeptide (Lys-Gly) (interchain with G-Cter in SUMO2)).

Homodimer. Heterodimer; efficient DNA binding requires dimerization with another bHLH protein. Forms a heterodimer with TWIST1 and TWIST2. Forms a heterodimer with NEUROD1; the heterodimer is inhibited in presence of ID2, but not NR0B2, to E-box element. Forms a heterodimer with TCF15; the heterodimer binds E-box element. Forms a heterodimer with MYOG; heterodimerization enhances MYOG DNA-binding and transcriptional activities. Forms a heterodimer with ATOH8; repress transcription of TCF3 and TCF3-NEUROG3 dimer-induced transactivation of E box-dependent promoters. Component of a nuclear TAL-1 complex composed at least of CBFA2T3, LDB1, TAL1 and TCF3. Interacts with NEUROD2. Interacts with EP300. Interacts with PTF1A, TGFB1I1 and UBE2I. Interacts with BHLHA9. Interacts with ASB2; the interaction is mediated by SKP2 and targets TCF3 for Notch-induced proteasomal degradation. Interacts with transcription factor ASCL5/AmeloD. In terms of assembly, interacts with RALGAPA1. Interacts with FIGLA. As to quaternary structure, forms a heterodimer with ATOH7; required for ATOH7 DNA-binding. In terms of processing, phosphorylated following NGF stimulation. Post-translationally, undergoes Notch-induced ubiquitination and subsequent proteasomal degradation which is mediated by ASB1 or ASB2, the substrate-recognition components of probable ECS E3 ubiquitin-protein ligase complexes.

The protein resides in the nucleus. In terms of biological role, transcriptional regulator. Involved in the initiation of neuronal differentiation and mesenchymal to epithelial transition. Heterodimers between TCF3 and tissue-specific basic helix-loop-helix (bHLH) proteins play major roles in determining tissue-specific cell fate during embryogenesis, like muscle or early B-cell differentiation. Together with TCF15, required for the mesenchymal to epithelial transition. Dimers bind DNA on E-box motifs: 5'-CANNTG-3'. Binds to the kappa-E2 site in the kappa immunoglobulin gene enhancer. Binds to IEB1 and IEB2, which are short DNA sequences in the insulin gene transcription control region. Functionally, facilitates ATOH7 binding to DNA at the consensus sequence 5'-CAGGTG-3', and positively regulates transcriptional activity. The protein is Transcription factor E2-alpha (TCF3) of Mesocricetus auratus (Golden hamster).